A 487-amino-acid polypeptide reads, in one-letter code: Bifunctional protein HldE (487 aa).

Residues 1–326 (MERREVESFF…QEIVAEVGHG (326 aa)) form a ribokinase region. 205–208 (NRKE) contacts ATP. Aspartate 275 is a catalytic residue. The interval 356-487 (FTNGCFDLLH…RIIEKILSSY (132 aa)) is cytidylyltransferase.

The protein in the N-terminal section; belongs to the carbohydrate kinase PfkB family. It in the C-terminal section; belongs to the cytidylyltransferase family. In terms of assembly, homodimer.

The catalysed reaction is D-glycero-beta-D-manno-heptose 7-phosphate + ATP = D-glycero-beta-D-manno-heptose 1,7-bisphosphate + ADP + H(+). It catalyses the reaction D-glycero-beta-D-manno-heptose 1-phosphate + ATP + H(+) = ADP-D-glycero-beta-D-manno-heptose + diphosphate. The protein operates within nucleotide-sugar biosynthesis; ADP-L-glycero-beta-D-manno-heptose biosynthesis; ADP-L-glycero-beta-D-manno-heptose from D-glycero-beta-D-manno-heptose 7-phosphate: step 1/4. It functions in the pathway nucleotide-sugar biosynthesis; ADP-L-glycero-beta-D-manno-heptose biosynthesis; ADP-L-glycero-beta-D-manno-heptose from D-glycero-beta-D-manno-heptose 7-phosphate: step 3/4. Catalyzes the phosphorylation of D-glycero-D-manno-heptose 7-phosphate at the C-1 position to selectively form D-glycero-beta-D-manno-heptose-1,7-bisphosphate. Functionally, catalyzes the ADP transfer from ATP to D-glycero-beta-D-manno-heptose 1-phosphate, yielding ADP-D-glycero-beta-D-manno-heptose. The polypeptide is Bifunctional protein HldE (Citrifermentans bemidjiense (strain ATCC BAA-1014 / DSM 16622 / JCM 12645 / Bem) (Geobacter bemidjiensis)).